Here is a 359-residue protein sequence, read N- to C-terminus: MSTENTLSVADLARENVRNLVPYQSARRLGGNGDVWLNANEFPTAVEFQLTQQTLNRYPECQPKAVIENYAQYAGVKPEQVLVSRGADEGIELVIRAFCEPGKDAILYCPPTYGMYSVSAETIGVERRTVPALENWQLDLQGISDNLDGTKVVFVCSPNNPTGQLINPQDLRTLLELTRGKAIVVADEAYIEFCPQATLTGWLVEYPHLVILRTLSKAFALAGLRCGFTLANEEVINLLLKVIAPYPLSTPVADIAAQALSPQGINAMRDRVAQTVQERQYLVNALQQTACVEHVFDSETNYILARFTASSSVFKSLWDQGIILRDQNKQPSLSGCLRITVGTRQENQRVIDALRAEPV.

Lysine 217 is modified (N6-(pyridoxal phosphate)lysine).

This sequence belongs to the class-II pyridoxal-phosphate-dependent aminotransferase family. Histidinol-phosphate aminotransferase subfamily. Homodimer. It depends on pyridoxal 5'-phosphate as a cofactor.

It catalyses the reaction L-histidinol phosphate + 2-oxoglutarate = 3-(imidazol-4-yl)-2-oxopropyl phosphate + L-glutamate. It functions in the pathway amino-acid biosynthesis; L-histidine biosynthesis; L-histidine from 5-phospho-alpha-D-ribose 1-diphosphate: step 7/9. In Salmonella enteritidis PT4 (strain P125109), this protein is Histidinol-phosphate aminotransferase.